The following is a 436-amino-acid chain: Putative UDP-arabinose 4-epimerase 4 (436 aa).

Residues 1–20 (MLNSSGVRTQRRSPRPLSLG) are disordered. Over 1-60 (MLNSSGVRTQRRSPRPLSLGGRKIITPTKFAYDHHNPDKVLDFVEMDCLEPKTKNNLTGK) the chain is Cytoplasmic. The helical; Signal-anchor for type II membrane protein transmembrane segment at 61–81 (LLLVASLLILAIIVISQSSSF) threads the bilayer. Topologically, residues 82-436 (TSPSAFSQRE…KIHPHGYNSY (355 aa)) are lumenal. 96–127 (HVLVTGGAGYIGSHAALRLLRDSYRVTIVDNL) serves as a coordination point for NAD(+). Catalysis depends on Tyr-244, which acts as the Proton acceptor.

Belongs to the NAD(P)-dependent epimerase/dehydratase family. The cofactor is NAD(+).

It localises to the golgi apparatus. It is found in the golgi stack membrane. It carries out the reaction UDP-beta-L-arabinopyranose = UDP-alpha-D-xylose. Its pathway is nucleotide-sugar biosynthesis; UDP-L-arabinose biosynthesis; UDP-L-arabinose from UDP-alpha-D-xylose: step 1/1. It participates in cell wall biogenesis; cell wall polysaccharide biosynthesis. In Arabidopsis thaliana (Mouse-ear cress), this protein is Putative UDP-arabinose 4-epimerase 4.